The chain runs to 260 residues: Interleukin-1 receptor-associated kinase 1-binding protein 1 (260 aa).

Residues G30–T50 form a disordered region. Residues L41 to T50 are compositionally biased toward polar residues. 3 positions are modified to phosphoserine: S56, S62, and S235. T237 bears the Phosphothreonine mark. Positions A240 to L260 are required for nuclear localization (NLS). S242 is subject to Phosphoserine. The residue at position 247 (T247) is a Phosphothreonine.

It belongs to the IRAK1BP1 family. As to quaternary structure, interacts with IRAK1 and RELA. Interacts with HSPA8 and HSPA1. In terms of processing, phosphorylation at Ser-56 and/or Ser-62 is required for full activity. Phosphorylated on at least one of Ser-235, Thr-237, Ser-242 and Thr-247 upon TNF-alpha activation, which favors nuclear translocation.

The protein resides in the cytoplasm. The protein localises to the nucleus. Component of the IRAK1-dependent TNFRSF1A signaling pathway that leads to NF-kappa-B activation and is required for cell survival. Acts by enhancing RELA transcriptional activity. The polypeptide is Interleukin-1 receptor-associated kinase 1-binding protein 1 (IRAK1BP1) (Homo sapiens (Human)).